The following is a 348-amino-acid chain: 4-hydroxy-3-methylbut-2-enyl diphosphate reductase (348 aa).

Residue C21 participates in [4Fe-4S] cluster binding. (2E)-4-hydroxy-3-methylbut-2-enyl diphosphate contacts are provided by H50 and H86. 2 residues coordinate dimethylallyl diphosphate: H50 and H86. Residues H50 and H86 each contribute to the isopentenyl diphosphate site. A [4Fe-4S] cluster-binding site is contributed by C108. Position 136 (H136) interacts with (2E)-4-hydroxy-3-methylbut-2-enyl diphosphate. H136 lines the dimethylallyl diphosphate pocket. H136 lines the isopentenyl diphosphate pocket. E138 functions as the Proton donor in the catalytic mechanism. Residue T177 coordinates (2E)-4-hydroxy-3-methylbut-2-enyl diphosphate. Residue C207 participates in [4Fe-4S] cluster binding. 4 residues coordinate (2E)-4-hydroxy-3-methylbut-2-enyl diphosphate: S235, S236, N237, and S280. Positions 235, 236, 237, and 280 each coordinate dimethylallyl diphosphate. Residues S235, S236, N237, and S280 each contribute to the isopentenyl diphosphate site.

This sequence belongs to the IspH family. The cofactor is [4Fe-4S] cluster.

It carries out the reaction isopentenyl diphosphate + 2 oxidized [2Fe-2S]-[ferredoxin] + H2O = (2E)-4-hydroxy-3-methylbut-2-enyl diphosphate + 2 reduced [2Fe-2S]-[ferredoxin] + 2 H(+). It catalyses the reaction dimethylallyl diphosphate + 2 oxidized [2Fe-2S]-[ferredoxin] + H2O = (2E)-4-hydroxy-3-methylbut-2-enyl diphosphate + 2 reduced [2Fe-2S]-[ferredoxin] + 2 H(+). The protein operates within isoprenoid biosynthesis; dimethylallyl diphosphate biosynthesis; dimethylallyl diphosphate from (2E)-4-hydroxy-3-methylbutenyl diphosphate: step 1/1. It participates in isoprenoid biosynthesis; isopentenyl diphosphate biosynthesis via DXP pathway; isopentenyl diphosphate from 1-deoxy-D-xylulose 5-phosphate: step 6/6. In terms of biological role, catalyzes the conversion of 1-hydroxy-2-methyl-2-(E)-butenyl 4-diphosphate (HMBPP) into a mixture of isopentenyl diphosphate (IPP) and dimethylallyl diphosphate (DMAPP). Acts in the terminal step of the DOXP/MEP pathway for isoprenoid precursor biosynthesis. In Agrobacterium fabrum (strain C58 / ATCC 33970) (Agrobacterium tumefaciens (strain C58)), this protein is 4-hydroxy-3-methylbut-2-enyl diphosphate reductase.